The sequence spans 157 residues: Crossover junction endodeoxyribonuclease RuvC (157 aa).

Catalysis depends on residues Asp-7, Glu-67, and Asp-139. Mg(2+)-binding residues include Asp-7, Glu-67, and Asp-139.

Belongs to the RuvC family. In terms of assembly, homodimer which binds Holliday junction (HJ) DNA. The HJ becomes 2-fold symmetrical on binding to RuvC with unstacked arms; it has a different conformation from HJ DNA in complex with RuvA. In the full resolvosome a probable DNA-RuvA(4)-RuvB(12)-RuvC(2) complex forms which resolves the HJ. It depends on Mg(2+) as a cofactor.

It localises to the cytoplasm. It catalyses the reaction Endonucleolytic cleavage at a junction such as a reciprocal single-stranded crossover between two homologous DNA duplexes (Holliday junction).. In terms of biological role, the RuvA-RuvB-RuvC complex processes Holliday junction (HJ) DNA during genetic recombination and DNA repair. Endonuclease that resolves HJ intermediates. Cleaves cruciform DNA by making single-stranded nicks across the HJ at symmetrical positions within the homologous arms, yielding a 5'-phosphate and a 3'-hydroxyl group; requires a central core of homology in the junction. The consensus cleavage sequence is 5'-(A/T)TT(C/G)-3'. Cleavage occurs on the 3'-side of the TT dinucleotide at the point of strand exchange. HJ branch migration catalyzed by RuvA-RuvB allows RuvC to scan DNA until it finds its consensus sequence, where it cleaves and resolves the cruciform DNA. The protein is Crossover junction endodeoxyribonuclease RuvC of Prochlorococcus marinus (strain AS9601).